Consider the following 489-residue polypeptide: Siroheme synthase (489 aa).

Positions 1–203 are precorrin-2 dehydrogenase /sirohydrochlorin ferrochelatase; that stretch reads MDFFPVFMRL…GREDAARETL (203 aa). Residues 22 to 23 and 43 to 44 each bind NAD(+); these read PV and PA. Residues 218 to 489 form a uroporphyrinogen-III C-methyltransferase region; it reads GEVFLVGAGP…ARSSTEGAEA (272 aa). Pro-227 serves as a coordination point for S-adenosyl-L-methionine. Catalysis depends on Asp-250, which acts as the Proton acceptor. Lys-272 (proton donor) is an active-site residue. S-adenosyl-L-methionine-binding positions include 303–305, Ile-308, 333–334, Met-385, and Gly-414; these read GGD and TA.

The protein in the N-terminal section; belongs to the precorrin-2 dehydrogenase / sirohydrochlorin ferrochelatase family. In the C-terminal section; belongs to the precorrin methyltransferase family.

It catalyses the reaction uroporphyrinogen III + 2 S-adenosyl-L-methionine = precorrin-2 + 2 S-adenosyl-L-homocysteine + H(+). It carries out the reaction precorrin-2 + NAD(+) = sirohydrochlorin + NADH + 2 H(+). The enzyme catalyses siroheme + 2 H(+) = sirohydrochlorin + Fe(2+). Its pathway is cofactor biosynthesis; adenosylcobalamin biosynthesis; precorrin-2 from uroporphyrinogen III: step 1/1. It participates in cofactor biosynthesis; adenosylcobalamin biosynthesis; sirohydrochlorin from precorrin-2: step 1/1. It functions in the pathway porphyrin-containing compound metabolism; siroheme biosynthesis; precorrin-2 from uroporphyrinogen III: step 1/1. The protein operates within porphyrin-containing compound metabolism; siroheme biosynthesis; siroheme from sirohydrochlorin: step 1/1. Its pathway is porphyrin-containing compound metabolism; siroheme biosynthesis; sirohydrochlorin from precorrin-2: step 1/1. Functionally, multifunctional enzyme that catalyzes the SAM-dependent methylations of uroporphyrinogen III at position C-2 and C-7 to form precorrin-2 via precorrin-1. Then it catalyzes the NAD-dependent ring dehydrogenation of precorrin-2 to yield sirohydrochlorin. Finally, it catalyzes the ferrochelation of sirohydrochlorin to yield siroheme. In Thioalkalivibrio sulfidiphilus (strain HL-EbGR7), this protein is Siroheme synthase.